Reading from the N-terminus, the 287-residue chain is uncharacterized protein (287 aa).

It belongs to the A.longa ORF167/ORF288 family.

Its subcellular location is the plastid. This is an uncharacterized protein from Euglena longa (Euglenophycean alga).